An 85-amino-acid chain; its full sequence is Putative regulatory protein THEYE_A0405 (85 aa).

Belongs to the RemA family.

In Thermodesulfovibrio yellowstonii (strain ATCC 51303 / DSM 11347 / YP87), this protein is Putative regulatory protein THEYE_A0405.